The sequence spans 264 residues: Claudin-18 (264 aa).

At 1–6 the chain is on the cytoplasmic side; sequence MATTTC. A helical membrane pass occupies residues 7 to 27; it reads QVVGLLLSLLGLAGCIAATGM. The Extracellular segment spans residues 28–80; it reads DMWSTQDLYDNPVTAVFQYEGLWRSCVQQSSGFTECRPYFTILGLPAMLQAVR. Residues 81 to 101 traverse the membrane as a helical segment; that stretch reads ALMIVGIVLGVIGILVSIFAL. Topologically, residues 102–122 are cytoplasmic; the sequence is KCIRIGSMDDSAKAKMTLTSG. Residues 123 to 143 form a helical membrane-spanning segment; sequence ILFIISGICAIIGVSVFANML. Residues 144–176 are Extracellular-facing; that stretch reads VTNFWMSTANMYSGMGGMGGMVQTVQTRYTFGA. Residues 177–197 form a helical membrane-spanning segment; the sequence is ALFVGWVAGGLTLIGGVMMCI. The Cytoplasmic portion of the chain corresponds to 198-264; that stretch reads ACRGLTPDDS…QSHPTKYDYV (67 aa). Residues 198–264 are required for role in regulation of RANKL-induced osteoclast differentiation; it reads ACRGLTPDDS…QSHPTKYDYV (67 aa). Ser-217 bears the Phosphoserine mark. The tract at residues 241 to 264 is disordered; the sequence is KKIYDGGARTEDDEQSHPTKYDYV. The span at 242 to 264 shows a compositional bias: basic and acidic residues; the sequence is KIYDGGARTEDDEQSHPTKYDYV.

The protein belongs to the claudin family. As to quaternary structure, interacts with TJP2/ZO-2. Interacts with TJP1/ZO-1. Interacts with YAP1 (phosphorylated); the interaction sequesters YAP1 away from the nucleus and thereby restricts transcription of YAP1 target genes. Interacts with CLDN19. As to expression, expressed in the lung (at protein level). Expressed in lung. Expressed in the stomach. In terms of tissue distribution, expressed in lung. As to expression, expressed in stomach. Expressed in bone. Expressed in stomach.

It is found in the cell junction. It localises to the tight junction. The protein localises to the cell membrane. The protein resides in the lateral cell membrane. Its function is as follows. Involved in alveolar fluid homeostasis via regulation of alveolar epithelial tight junction composition and therefore ion transport and solute permeability, potentially via downstream regulation of the actin cytoskeleton organization and beta-2-adrenergic signaling. Required for lung alveolarization and maintenance of the paracellular alveolar epithelial barrier. Acts to maintain epithelial progenitor cell proliferation and organ size, via regulation of YAP1 localization away from the nucleus and thereby restriction of YAP1 target gene transcription. Acts as a negative regulator of RANKL-induced osteoclast differentiation, potentially via relocation of TJP2/ZO-2 away from the nucleus, subsequently involved in bone resorption in response to calcium deficiency. Mediates the osteoprotective effects of estrogen, potentially via acting downstream of estrogen signaling independently of RANKL signaling pathways. Functionally, involved in the maintenance of homeostasis of the alveolar microenvironment via regulation of pH and subsequent T-cell activation in the alveolar space, is therefore indirectly involved in limiting C.neoformans infection. Required for the formation of the gastric paracellular barrier via its role in tight junction formation, thereby involved in the response to gastric acidification. This chain is Claudin-18 (Cldn18), found in Mus musculus (Mouse).